Here is a 414-residue protein sequence, read N- to C-terminus: WW domain-containing oxidoreductase (414 aa).

Residues 1 to 23 (MAALRYAGLDDTDSEDELPPGWE) form a disordered region. Phosphothreonine is present on T12. Phosphoserine is present on S14. The WW 1 domain occupies 16-49 (DELPPGWEERTTKDGWVYYANHTEEKTQWEHPKT). At Y33 the chain carries Phosphotyrosine. The Nuclear localization signal motif lies at 50–55 (GKRKRV). The WW 2 domain occupies 57–90 (GDLPYGWEQETDENGQVFFVDHINKRTTYLDPRL). The tract at residues 125-414 (KVVVVTGANS…IQERLGSQSG (290 aa)) is interaction with MAPT. 131–137 (GANSGIG) provides a ligand contact to NADP(+). Positions 209–273 (CNAATFALPW…RFTDINDSLG (65 aa)) are mediates targeting to the mitochondria. Position 260 (S260) interacts with substrate. Y287 carries the post-translational modification Phosphotyrosine; by TNK2. Catalysis depends on Y293, which acts as the Proton acceptor.

The protein belongs to the short-chain dehydrogenases/reductases (SDR) family. Interacts with TP53, p73/TP73 and MAPK8. Interacts with MAPT/TAU, RUNX2 and HYAL2. Forms a ternary complex with TP53 and MDM2. Interacts with ERBB4, LITAF and WBP1. Interacts with DVL1, DVL2 and DVL3. May interact with FAM189B and SCOTIN. Interacts with TNK2. Interacts with TMEM207. Interacts (via WW domain) with VOPP1. Phosphorylated upon genotoxic stress. Phosphorylation of Tyr-33 regulates interaction with TP53, TP73 and MAPK8. May also regulate proapoptotic activity. Phosphorylation by TNK2 is associated with polyubiquitination and degradation. In terms of processing, ubiquitinated when phosphorylated by TNK2, leading to its degradation. As to expression, widely expressed. Strongly expressed in testis, prostate, and ovary. Overexpressed in cancer cell lines. Isoform 5 and isoform 6 may only be expressed in tumor cell lines.

It is found in the cytoplasm. The protein resides in the nucleus. Its subcellular location is the mitochondrion. The protein localises to the golgi apparatus. It localises to the lysosome. Putative oxidoreductase. Acts as a tumor suppressor and plays a role in apoptosis. Required for normal bone development. May function synergistically with p53/TP53 to control genotoxic stress-induced cell death. Plays a role in TGFB1 signaling and TGFB1-mediated cell death. May also play a role in tumor necrosis factor (TNF)-mediated cell death. Inhibits Wnt signaling, probably by sequestering DVL2 in the cytoplasm. The polypeptide is WW domain-containing oxidoreductase (WWOX) (Homo sapiens (Human)).